The sequence spans 1078 residues: MEGILAFDRELDVALLDRVVQTFYQGVGAEQQQAQQVLTQFQAHPDAWSQAYSILEKSEYPQTKYIALSVLDKLITTRWKMLPKEQRLGIRNYIVAVMIKNSSDETVLQQQKTFLNKLDLTLVQILKQEWPHNWPNFIPEIVQASKTNLSLCENNMIVLRLLSEEIFDYSAEQMTQLKTKNLKNQMCGEFAEIFQLCSQILERAQKPSLIKATLGTLLRFLNWIPLGYIFETNIVELITNRFLNVPDFRNVTIECLTEIASLTSQPQYNDKFVTMFNLVMTSVNSMLPLQTDFREAYEESSTNEQDFIQNLALFLCAFFSSHLRPLENPENQEVLLNAHSYLLNISRINEREIFKICLEYWSKLVAQLYEEMQQIPMSEMNPLLNLSSPTSLISSNPNMLANLPLRKHIYKDILSTLRLVMIENMVKPEEVLIVENDEGEIVREFVKETDTITLYKSMREVLVYLTHLDVVDTEIVMTEKLARIVVGTEWSWQNLNTLCWAIGSISGAMNEEMEKRFLVNVIKDLLGLCEMKRGKDNKAVVASNIMYVVGQYPRFLKAHWKFLKTVVNKLFEFMHEYHEGVQDMACDTFIKIAQKCRRHFVAQQLGETEPFINEIIRNLAKTTEDLTPQQTHTFYEACGYMISAQPQKHLQERLIFDLMALPNQAWENIVAQAAQNAQVLGDPQTVKILANVLKTNVAACTSIGSGFYPQIAKNYVDMLGLYKAVSGLISEVVAAQGNIATKTPHVRGLRTIKKEILKLVDAYISRAEDLELVGNTLIPALFEAVLLDYLQNVPDARDAEVLNLITTIVNQLSELLTDKIPLVLDAVFGCTLEMISKDFSEYPEHRAAFFQLLRAINLNCFPALLNIPAPQFKLVINSIVWSFKHVSRDIQETGLNILLELINNMASMGPDVSNAFFQTYYISLLQDILYVLTDSDHKSGFKLQSLILARLFYLVESNQITVPLYDPSQFPQEMNNQLFLRQYIMNLLVTAFPHLQPIQIQEFVQTVLALNQDSIKFKLALRDFLIQLKEFGGDNAELYLEEKEQELAAQQKAQLEKAMTVPGMIKPVDMPTMEEEEL.

An Importin N-terminal domain is found at 34–100 (AQQVLTQFQA…RNYIVAVMIK (67 aa)).

Belongs to the exportin family. In terms of assembly, interacts with php4.

Its subcellular location is the nucleus. In terms of biological role, receptor for the leucine-rich nuclear export signal (NES). The chain is Exportin-1 (xpo1) from Schizosaccharomyces pombe (strain 972 / ATCC 24843) (Fission yeast).